Consider the following 135-residue polypeptide: Ribonuclease VapC5 (135 aa).

One can recognise a PINc domain in the interval 9 to 130; sequence VLDTSVFIAT…FAALDGAASV (122 aa). Mg(2+)-binding residues include Asp11 and Asp100.

The protein belongs to the PINc/VapC protein family. As to quaternary structure, forms a complex with VapB5. Mg(2+) serves as cofactor.

It localises to the secreted. Its function is as follows. Probable toxic component of a type II toxin-antitoxin (TA) system. The cognate antitoxin is VapB5. Has limited RNase activity on substrates; activity is seen with a VapC5-VapB5 complex. The chain is Ribonuclease VapC5 from Mycobacterium tuberculosis (strain ATCC 25618 / H37Rv).